A 122-amino-acid polypeptide reads, in one-letter code: MLSEFLKDYLPIIIFLIIALGLSCAFVVVNLILSPKHPDPEKLSAYECGFEPFEDSRMEFDVRFYLVAILFIIFDLEIAFLFPWAISLGNIGGLGFTSMMIFLFILTVGFIYEWKKGALDWE.

3 helical membrane passes run 12 to 32, 66 to 86, and 91 to 111; these read IIIF…VNLI, LVAI…PWAI, and IGGL…VGFI.

The protein belongs to the complex I subunit 3 family. In terms of assembly, NDH-1 is composed of 14 different subunits. Subunits NuoA, H, J, K, L, M, N constitute the membrane sector of the complex.

It is found in the cell inner membrane. It carries out the reaction a quinone + NADH + 5 H(+)(in) = a quinol + NAD(+) + 4 H(+)(out). Its function is as follows. NDH-1 shuttles electrons from NADH, via FMN and iron-sulfur (Fe-S) centers, to quinones in the respiratory chain. The immediate electron acceptor for the enzyme in this species is believed to be ubiquinone. Couples the redox reaction to proton translocation (for every two electrons transferred, four hydrogen ions are translocated across the cytoplasmic membrane), and thus conserves the redox energy in a proton gradient. The chain is NADH-quinone oxidoreductase subunit A from Pelagibacter ubique (strain HTCC1062).